The primary structure comprises 164 residues: S-ribosylhomocysteine lyase (164 aa).

The Fe cation site is built by His54, His58, and Cys128.

Belongs to the LuxS family. As to quaternary structure, homodimer. The cofactor is Fe cation.

The catalysed reaction is S-(5-deoxy-D-ribos-5-yl)-L-homocysteine = (S)-4,5-dihydroxypentane-2,3-dione + L-homocysteine. Its function is as follows. Involved in the synthesis of autoinducer 2 (AI-2) which is secreted by bacteria and is used to communicate both the cell density and the metabolic potential of the environment. The regulation of gene expression in response to changes in cell density is called quorum sensing. Catalyzes the transformation of S-ribosylhomocysteine (RHC) to homocysteine (HC) and 4,5-dihydroxy-2,3-pentadione (DPD). In Campylobacter hominis (strain ATCC BAA-381 / DSM 21671 / CCUG 45161 / LMG 19568 / NCTC 13146 / CH001A), this protein is S-ribosylhomocysteine lyase.